Here is a 121-residue protein sequence, read N- to C-terminus: Large ribosomal subunit protein uL18 (121 aa).

A disordered region spans residues 63-88 (AAIRPDPSPKKSQKQPPKTHKRYNLK). Residues 73-87 (KSQKQPPKTHKRYNL) show a composition bias toward basic residues.

Belongs to the universal ribosomal protein uL18 family. Component of the large ribosomal subunit (LSU).

It is found in the cytoplasm. Its subcellular location is the nucleus. Its function is as follows. Component of the ribosome, a large ribonucleoprotein complex responsible for the synthesis of proteins in the cell. The small ribosomal subunit (SSU) binds messenger RNAs (mRNAs) and translates the encoded message by selecting cognate aminoacyl-transfer RNA (tRNA) molecules. The large subunit (LSU) contains the ribosomal catalytic site termed the peptidyl transferase center (PTC), which catalyzes the formation of peptide bonds, thereby polymerizing the amino acids delivered by tRNAs into a polypeptide chain. The nascent polypeptides leave the ribosome through a tunnel in the LSU and interact with protein factors that function in enzymatic processing, targeting, and the membrane insertion of nascent chains at the exit of the ribosomal tunnel. In Solanum melongena (Eggplant), this protein is Large ribosomal subunit protein uL18 (RPL5).